The chain runs to 500 residues: Probable cytosol aminopeptidase (500 aa).

The Mn(2+) site is built by K274 and D279. Residue K286 is part of the active site. Mn(2+)-binding residues include D297, D356, and E358. The active site involves R360.

It belongs to the peptidase M17 family. It depends on Mn(2+) as a cofactor.

The protein resides in the cytoplasm. The catalysed reaction is Release of an N-terminal amino acid, Xaa-|-Yaa-, in which Xaa is preferably Leu, but may be other amino acids including Pro although not Arg or Lys, and Yaa may be Pro. Amino acid amides and methyl esters are also readily hydrolyzed, but rates on arylamides are exceedingly low.. It carries out the reaction Release of an N-terminal amino acid, preferentially leucine, but not glutamic or aspartic acids.. In terms of biological role, presumably involved in the processing and regular turnover of intracellular proteins. Catalyzes the removal of unsubstituted N-terminal amino acids from various peptides. The protein is Probable cytosol aminopeptidase of Saccharophagus degradans (strain 2-40 / ATCC 43961 / DSM 17024).